The primary structure comprises 405 residues: Argininosuccinate synthase (405 aa).

ATP contacts are provided by residues 12–20 (AYSGGLDTS) and Ala-40. Residues Tyr-92 and Ser-97 each contribute to the L-citrulline site. ATP is bound at residue Gly-122. 3 residues coordinate L-aspartate: Thr-124, Asn-128, and Asp-129. Asn-128 contributes to the L-citrulline binding site. L-citrulline is bound by residues Arg-132, Ser-181, Ser-190, Glu-266, and Tyr-278.

It belongs to the argininosuccinate synthase family. Type 1 subfamily. In terms of assembly, homotetramer.

Its subcellular location is the cytoplasm. The catalysed reaction is L-citrulline + L-aspartate + ATP = 2-(N(omega)-L-arginino)succinate + AMP + diphosphate + H(+). It functions in the pathway amino-acid biosynthesis; L-arginine biosynthesis; L-arginine from L-ornithine and carbamoyl phosphate: step 2/3. This is Argininosuccinate synthase from Edwardsiella ictaluri (strain 93-146).